A 363-amino-acid chain; its full sequence is NADH-quinone oxidoreductase subunit H (363 aa).

10 consecutive transmembrane segments (helical) span residues 29–49 (VLKI…YVVW), 62–82 (GPMY…KLLF), 94–114 (AIFV…WAVV), 127–147 (VGLL…ILAG), 166–186 (VVSY…AAGS), 202–222 (FFDW…VSGV), 239–257 (IVAG…LFFL), 264–286 (ILVS…QGWV), 293–313 (LIDW…LFFA), and 339–359 (FIPL…SGVI).

Belongs to the complex I subunit 1 family. NDH-1 is composed of 14 different subunits. Subunits NuoA, H, J, K, L, M, N constitute the membrane sector of the complex.

Its subcellular location is the cell inner membrane. It catalyses the reaction a quinone + NADH + 5 H(+)(in) = a quinol + NAD(+) + 4 H(+)(out). NDH-1 shuttles electrons from NADH, via FMN and iron-sulfur (Fe-S) centers, to quinones in the respiratory chain. The immediate electron acceptor for the enzyme in this species is believed to be ubiquinone. Couples the redox reaction to proton translocation (for every two electrons transferred, four hydrogen ions are translocated across the cytoplasmic membrane), and thus conserves the redox energy in a proton gradient. This subunit may bind ubiquinone. This chain is NADH-quinone oxidoreductase subunit H, found in Xylella fastidiosa (strain Temecula1 / ATCC 700964).